A 636-amino-acid chain; its full sequence is DNA-directed RNA polymerase subunit beta' (636 aa).

Positions 70, 72, 85, and 88 each coordinate Zn(2+). Residues aspartate 471, aspartate 473, and aspartate 475 each coordinate Mg(2+).

This sequence belongs to the RNA polymerase beta' chain family. RpoC1 subfamily. Mg(2+) serves as cofactor. It depends on Zn(2+) as a cofactor.

Its subcellular location is the plastid. The protein localises to the cyanelle. The catalysed reaction is RNA(n) + a ribonucleoside 5'-triphosphate = RNA(n+1) + diphosphate. Functionally, DNA-dependent RNA polymerase catalyzes the transcription of DNA into RNA using the four ribonucleoside triphosphates as substrates. The chain is DNA-directed RNA polymerase subunit beta' from Cyanophora paradoxa.